The primary structure comprises 359 residues: Phospho-N-acetylmuramoyl-pentapeptide-transferase (359 aa).

10 helical membrane-spanning segments follow: residues 3–23, 55–75, 80–100, 117–137, 156–176, 187–207, 231–251, 255–275, 280–300, and 334–354; these read QILV…PALI, VAIV…GLAF, VSAS…VGFL, TAKT…VLQF, IATV…IVSA, LDGL…LITF, LTLI…WNAA, IFMG…LSVT, ILAV…VLQI, and FWLL…GEWL.

This sequence belongs to the glycosyltransferase 4 family. MraY subfamily. Mg(2+) is required as a cofactor.

It is found in the cell membrane. It carries out the reaction UDP-N-acetyl-alpha-D-muramoyl-L-alanyl-gamma-D-glutamyl-meso-2,6-diaminopimeloyl-D-alanyl-D-alanine + di-trans,octa-cis-undecaprenyl phosphate = di-trans,octa-cis-undecaprenyl diphospho-N-acetyl-alpha-D-muramoyl-L-alanyl-D-glutamyl-meso-2,6-diaminopimeloyl-D-alanyl-D-alanine + UMP. The protein operates within cell wall biogenesis; peptidoglycan biosynthesis. Catalyzes the initial step of the lipid cycle reactions in the biosynthesis of the cell wall peptidoglycan: transfers peptidoglycan precursor phospho-MurNAc-pentapeptide from UDP-MurNAc-pentapeptide onto the lipid carrier undecaprenyl phosphate, yielding undecaprenyl-pyrophosphoryl-MurNAc-pentapeptide, known as lipid I. The polypeptide is Phospho-N-acetylmuramoyl-pentapeptide-transferase (Mycobacterium leprae (strain TN)).